Consider the following 174-residue polypeptide: Isomerase prhC (174 aa).

The protein belongs to the trt14 isomerase family. In terms of assembly, homodimer.

Its pathway is secondary metabolite biosynthesis; terpenoid biosynthesis. Isomerase; part of the gene cluster that mediates the biosynthesis of paraherquonin, a meroterpenoid with a unique, highly congested hexacyclic molecular architecture. The first step of the pathway is the synthesis of 3,5-dimethylorsellinic acid (DMOA) by the polyketide synthase prhL. Synthesis of DMOA is followed by farnesylation by the prenyltransferase prhE, methylesterification by the methyl-transferase prhM, epoxidation of the prenyl chain by the flavin-dependent monooxygenase prhF, and cyclization of the farnesyl moiety by the terpene cyclase prhH, to yield the tetracyclic intermediate, protoaustinoid A. The short chain dehydrogenase prhI then oxidizes the C-3 alcohol group of the terpene cyclase product to transform protoaustinoid A into protoaustinoid B. The FAD-binding monooxygenase prhJ catalyzes the oxidation of protoaustinoid B into preaustinoid A which is further oxidized into preaustinoid A1 by FAD-binding monooxygenase phrK. Finally, prhA leads to berkeleydione via the berkeleyone B intermediate. PrhA is a multifunctional dioxygenase that first desaturates at C5-C6 to form berkeleyone B, followed by rearrangement of the A/B-ring to form the cycloheptadiene moiety in berkeleydione. Berkeleydione serves as the key intermediate for the biosynthesis of paraherquonin as well as many other meroterpenoids. The cytochrome P450 monooxygenases prhB, prhD, and prhN, as well as the isomerase prhC, are probably involved in the late stage of paraherquonin biosynthesis, after the production of berkeleydione. Especially prhC might be a multifunctional enzyme that catalyzes the D-ring expansion via intramolecular methoxy rearrangement, as well as the hydrolysis of the expanded D-ring. The polypeptide is Isomerase prhC (Penicillium brasilianum).